Consider the following 423-residue polypeptide: Immunity-related GTPase family M protein 3 (423 aa).

One can recognise an IRG-type G domain in the interval 83–260 (YRVKIAVTGD…PELRNTLQKD (178 aa)). GTP is bound by residues 92 to 99 (DSGNGMSS), 117 to 121 (TGVVR), and 200 to 202 (KLD).

This sequence belongs to the TRAFAC class dynamin-like GTPase superfamily. IRG family.

It localises to the endoplasmic reticulum. Its subcellular location is the cytoplasmic vesicle membrane. It is found in the lipid droplet. It carries out the reaction GTP + H2O = GDP + phosphate + H(+). Its function is as follows. Immunity-related GTPase that plays important roles in host resistance to acute infection by protozoan, such as Toxoplasma gondii and Leishmania major. Acts as a dynamin-like protein that binds to intracellular membranes and promotes remodeling and trafficking of those membranes. Acts predominantly to restrict acute protozoan infection: expression is required in both hematopoietic and non-hematopoietic cellular compartments and is dependent on Stat1. Only plays a partial role in the control of latent Toxoplasma infection. Involved in the clearance of acute protozoan infections by regulating autophagy, possibly by promoting the fusion of phagosomes with lysosomes for efficient degradation of vacuoles containing parasites. Probably involved in membrane disruption of parasite-containing vacuoles. In addition to its role in resistance to acute infection by protozoan, also acts as a negative regulator of the integrated stress response (ISR) following coxsackievirus B3 infection. Promotes differentiation of activated CD8(+) T-cells. The protein is Immunity-related GTPase family M protein 3 of Mus musculus (Mouse).